A 210-amino-acid polypeptide reads, in one-letter code: Putative biopolymer transport protein ExbB-like 3 (210 aa).

The next 3 helical transmembrane spans lie at 2–22 (AGGI…ALII), 104–124 (LFQT…ILGL), and 152–172 (LVST…ANVF).

This sequence belongs to the ExbB/TolQ family.

Its subcellular location is the cell inner membrane. In terms of biological role, involved in the TonB-dependent energy-dependent transport of various receptor-bound substrates. Protects ExbD from proteolytic degradation and functionally stabilizes TonB. This chain is Putative biopolymer transport protein ExbB-like 3, found in Synechocystis sp. (strain ATCC 27184 / PCC 6803 / Kazusa).